Reading from the N-terminus, the 1710-residue chain is Extracellular matrix protein A (1710 aa).

The signal sequence occupies residues 1–22; it reads MKISIFILLLFISSMVIISVNA. 66 Cys-rich CT repeats span residues 43-70, 71-94, 95-117, 118-141, 142-165, 166-189, 190-213, 214-237, 238-261, 262-285, 286-309, 310-333, 334-357, 358-381, 382-405, 406-429, 430-453, 454-477, 478-501, 502-525, 526-549, 550-573, 574-597, 598-621, 622-645, 646-669, 670-693, 694-717, 718-741, 742-765, 766-789, 790-813, 814-837, 838-861, 862-885, 886-909, 910-933, 934-957, 958-981, 982-1005, 1006-1029, 1030-1053, 1054-1077, 1078-1101, 1102-1125, 1126-1149, 1150-1173, 1174-1197, 1198-1221, 1222-1245, 1246-1269, 1270-1293, 1294-1317, 1318-1341, 1342-1365, 1366-1389, 1390-1413, 1414-1437, 1438-1461, 1462-1485, 1486-1509, 1511-1534, 1558-1581, 1582-1606, 1608-1632, and 1658-1682; these read NRWS…CDDE, NACT…VDDK, NPCT…CDDK, NACT…CDDN, NPCT…VDDN, NPCT…VDDL, NKCT…CDDN, NACT…CDDK, NQCT…TDDN, NKCT…TDDN, KACT…CDDN, NACT…CDDS, NKCT…CDDS, NACT…TDDN, NACT…CDDR, NPCT…TDDS, DKCT…CDDN, DACT…TDDN, NKCT…CDDG, NKCT…CPKP, DKCS…CTSD, NKCQ…CDDG, NACT…LPKN, NKCI…CECD, and NPKT…VITS. Asn-150 and Asn-151 each carry an N-linked (GlcNAc...) asparagine glycan. 2 N-linked (GlcNAc...) asparagine glycosylation sites follow: Asn-270 and Asn-271. The N-linked (GlcNAc...) asparagine glycan is linked to Asn-415. Asn-535 carries N-linked (GlcNAc...) asparagine glycosylation. Residue Asn-655 is glycosylated (N-linked (GlcNAc...) asparagine). Asn-751 carries an N-linked (GlcNAc...) asparagine glycan. Residues Asn-871, Asn-894, and Asn-895 are each glycosylated (N-linked (GlcNAc...) asparagine). The N-linked (GlcNAc...) asparagine glycan is linked to Asn-1015. Residues Asn-1110 and Asn-1111 are each glycosylated (N-linked (GlcNAc...) asparagine). The N-linked (GlcNAc...) asparagine glycan is linked to Asn-1183. A glycan (N-linked (GlcNAc...) asparagine) is linked at Asn-1255. Asn-1351 is a glycosylation site (N-linked (GlcNAc...) asparagine). Asn-1530 carries an N-linked (GlcNAc...) asparagine glycan. Asn-1624 carries N-linked (GlcNAc...) asparagine glycosylation.

The protein resides in the secreted. This chain is Extracellular matrix protein A (ecmA), found in Dictyostelium discoideum (Social amoeba).